The following is a 448-amino-acid chain: Binary larvicide subunit BinB (448 aa).

Positions 1-198 (MCDSKDNSGV…TAFVNSSFYA (198 aa)) are beta-trefoil domain. A disulfide bridge links Cys67 with Cys161. The probable pore-forming domain stretch occupies residues 199-448 (AAIPQLPQTS…NEELIPKINQ (250 aa)).

This sequence belongs to the toxin_10 family. In terms of assembly, forms a heterodimer with BinA. In terms of processing, processed by proteases extracted from mosquito larval gut.

It localises to the spore. Its subcellular location is the perispore. In terms of biological role, component of a binary toxin active against Culex and some Aedes mosquito larvae; mortality towards both C.quinquefasciatus and A.atropalpus is maximal by 48 hours. A.aegypti is not very susceptible to this toxin. This subunit is responsible for localized binding to specific regions of the host larval gut. Binary toxin internalization into host gut cells requires both proteins. The polypeptide is Binary larvicide subunit BinB (binB) (Lysinibacillus sphaericus (Bacillus sphaericus)).